The following is a 226-amino-acid chain: N-acetyltransferase family 8 member 3 (226 aa).

The next 2 membrane-spanning stretches (helical) occupy residues 36–56 and 58–78; these read MLLL…LFLA and GSWL…WFLA. Residues 61-220 enclose the N-acetyltransferase domain; that stretch reads LLVLLSILTL…PMINLKYSLT (160 aa).

Belongs to the camello family.

The protein localises to the nucleus membrane. The protein resides in the cytoplasm. Its subcellular location is the perinuclear region. It carries out the reaction L-lysyl-[protein] + acetyl-CoA = N(6)-acetyl-L-lysyl-[protein] + CoA + H(+). Functionally, has histone acetyltransferase activity in vitro, with specificity for histone H4. This chain is N-acetyltransferase family 8 member 3, found in Mus musculus (Mouse).